We begin with the raw amino-acid sequence, 330 residues long: Anthranilate phosphoribosyltransferase (330 aa).

5-phospho-alpha-D-ribose 1-diphosphate contacts are provided by residues glycine 75, 78-79 (GD), threonine 83, 85-88 (NVST), 103-111 (KHGNRAASS), and alanine 115. Glycine 75 contacts anthranilate. Residue serine 87 participates in Mg(2+) binding. Anthranilate is bound at residue asparagine 106. Arginine 161 contributes to the anthranilate binding site. Residues aspartate 220 and glutamate 221 each coordinate Mg(2+).

Belongs to the anthranilate phosphoribosyltransferase family. As to quaternary structure, homodimer. Requires Mg(2+) as cofactor.

The enzyme catalyses N-(5-phospho-beta-D-ribosyl)anthranilate + diphosphate = 5-phospho-alpha-D-ribose 1-diphosphate + anthranilate. The protein operates within amino-acid biosynthesis; L-tryptophan biosynthesis; L-tryptophan from chorismate: step 2/5. Its function is as follows. Catalyzes the transfer of the phosphoribosyl group of 5-phosphorylribose-1-pyrophosphate (PRPP) to anthranilate to yield N-(5'-phosphoribosyl)-anthranilate (PRA). In Erythrobacter litoralis (strain HTCC2594), this protein is Anthranilate phosphoribosyltransferase.